Reading from the N-terminus, the 454-residue chain is Argininosuccinate lyase (454 aa).

It belongs to the lyase 1 family. Argininosuccinate lyase subfamily.

It localises to the cytoplasm. It catalyses the reaction 2-(N(omega)-L-arginino)succinate = fumarate + L-arginine. It participates in amino-acid biosynthesis; L-arginine biosynthesis; L-arginine from L-ornithine and carbamoyl phosphate: step 3/3. This Herpetosiphon aurantiacus (strain ATCC 23779 / DSM 785 / 114-95) protein is Argininosuccinate lyase.